We begin with the raw amino-acid sequence, 246 residues long: Bis(5'-nucleosyl)-tetraphosphatase PrpE [asymmetrical] (246 aa).

This sequence belongs to the PrpE family. Requires Ni(2+) as cofactor.

It catalyses the reaction P(1),P(4)-bis(5'-guanosyl) tetraphosphate + H2O = GMP + GTP + 2 H(+). In terms of biological role, asymmetrically hydrolyzes Ap4p to yield AMP and ATP. In Bacillus cereus (strain AH820), this protein is Bis(5'-nucleosyl)-tetraphosphatase PrpE [asymmetrical].